A 305-amino-acid polypeptide reads, in one-letter code: Oxygen-dependent coproporphyrinogen-III oxidase (305 aa).

Ser92 contacts substrate. His96 and His106 together coordinate a divalent metal cation. The active-site Proton donor is the His106. Residue 108-110 (NVR) participates in substrate binding. His145 and His175 together coordinate a divalent metal cation. The interval 239–274 (YVEFNLLFDRGTLFGLQSGGRAESILISLPPLVRWE) is important for dimerization. 257-259 (GGR) serves as a coordination point for substrate.

Belongs to the aerobic coproporphyrinogen-III oxidase family. In terms of assembly, homodimer. The cofactor is a divalent metal cation.

The protein localises to the cytoplasm. The enzyme catalyses coproporphyrinogen III + O2 + 2 H(+) = protoporphyrinogen IX + 2 CO2 + 2 H2O. Its pathway is porphyrin-containing compound metabolism; protoporphyrin-IX biosynthesis; protoporphyrinogen-IX from coproporphyrinogen-III (O2 route): step 1/1. In terms of biological role, involved in the heme biosynthesis. Catalyzes the aerobic oxidative decarboxylation of propionate groups of rings A and B of coproporphyrinogen-III to yield the vinyl groups in protoporphyrinogen-IX. The sequence is that of Oxygen-dependent coproporphyrinogen-III oxidase from Xylella fastidiosa (strain M12).